Reading from the N-terminus, the 449-residue chain is Phosphoglucosamine mutase (449 aa).

Catalysis depends on serine 101, which acts as the Phosphoserine intermediate. 4 residues coordinate Mg(2+): serine 101, aspartate 241, aspartate 243, and aspartate 245. The residue at position 101 (serine 101) is a Phosphoserine.

This sequence belongs to the phosphohexose mutase family. Requires Mg(2+) as cofactor. Activated by phosphorylation.

The enzyme catalyses alpha-D-glucosamine 1-phosphate = D-glucosamine 6-phosphate. In terms of biological role, catalyzes the conversion of glucosamine-6-phosphate to glucosamine-1-phosphate. The chain is Phosphoglucosamine mutase from Ruminiclostridium cellulolyticum (strain ATCC 35319 / DSM 5812 / JCM 6584 / H10) (Clostridium cellulolyticum).